A 174-amino-acid chain; its full sequence is NADH-ubiquinone oxidoreductase chain 6 (174 aa).

5 helical membrane passes run 1–21 (MTYV…GFSS), 24–44 (SPIY…GIVL), 46–66 (FGGS…MLVV), 86–106 (VMIL…VVYM), and 151–171 (WLMV…IEIT).

The protein belongs to the complex I subunit 6 family. In terms of assembly, core subunit of respiratory chain NADH dehydrogenase (Complex I) which is composed of 45 different subunits.

The protein resides in the mitochondrion inner membrane. The enzyme catalyses a ubiquinone + NADH + 5 H(+)(in) = a ubiquinol + NAD(+) + 4 H(+)(out). In terms of biological role, core subunit of the mitochondrial membrane respiratory chain NADH dehydrogenase (Complex I) which catalyzes electron transfer from NADH through the respiratory chain, using ubiquinone as an electron acceptor. Essential for the catalytic activity and assembly of complex I. The sequence is that of NADH-ubiquinone oxidoreductase chain 6 (MT-ND6) from Oryctolagus cuniculus (Rabbit).